The chain runs to 404 residues: GTPase Obg (404 aa).

An Obg domain is found at 1-159 (MKFIDEARIE…RALRLELKVL (159 aa)). A disordered region spans residues 22–43 (SFRREKFIPRGGPDGGDGGRGG). Residues 33 to 43 (GPDGGDGGRGG) are compositionally biased toward gly residues. The OBG-type G domain occupies 160–334 (ADVGLLGMPN…LVFAIQDFLD (175 aa)). GTP is bound by residues 166–173 (GMPNAGKS), 191–195 (FTTLA), 213–216 (DIPG), 284–287 (NKLD), and 315–317 (SAL). Mg(2+) contacts are provided by serine 173 and threonine 193. The segment at 373-404 (LLAEGETGTGDDGRDGNENDPADEQDTNRPNH) is disordered.

Belongs to the TRAFAC class OBG-HflX-like GTPase superfamily. OBG GTPase family. In terms of assembly, monomer. It depends on Mg(2+) as a cofactor.

It localises to the cytoplasm. Functionally, an essential GTPase which binds GTP, GDP and possibly (p)ppGpp with moderate affinity, with high nucleotide exchange rates and a fairly low GTP hydrolysis rate. Plays a role in control of the cell cycle, stress response, ribosome biogenesis and in those bacteria that undergo differentiation, in morphogenesis control. The protein is GTPase Obg of Aromatoleum aromaticum (strain DSM 19018 / LMG 30748 / EbN1) (Azoarcus sp. (strain EbN1)).